A 161-amino-acid polypeptide reads, in one-letter code: V-type proton ATPase 16 kDa proteolipid subunit c 2 (161 aa).

Topologically, residues 1 to 15 (MSYDLETAEHAAYAP) are lumenal. The chain crosses the membrane as a helical span at residues 16–36 (FFGYMGAASAQIFTVLGAAYG). Over 37-58 (TAKSAVGICSMGVMRPELIMKS) the chain is Cytoplasmic. The chain crosses the membrane as a helical span at residues 59-79 (VIPVIMAGIIGIYGLVVAMVL). The Lumenal segment spans residues 80–98 (KGKVQAASAGYDLNKGFAH). Residues 99-119 (LAAGLTCGLCGLGAGYAIGIV) traverse the membrane as a helical segment. The Cytoplasmic segment spans residues 120–137 (GDAGVRGTAQQPRLFVGM). A helical membrane pass occupies residues 138–158 (ILILIFSEVLGLYGMIVALIL). Residues 159 to 161 (GTS) lie on the Lumenal side of the membrane.

The protein belongs to the V-ATPase proteolipid subunit family. In terms of assembly, V-ATPase is a heteromultimeric enzyme made up of two complexes: the ATP-hydrolytic V1 complex and the proton translocation V0 complex. The V1 complex consists of three catalytic AB heterodimers that form a heterohexamer, three peripheral stalks each consisting of EG heterodimers, one central rotor including subunits D and F, and the regulatory subunits C and H. The proton translocation complex V0 consists of the proton transport subunit a, a ring of proteolipid subunits c9c'', rotary subunit d, subunits e and f, and the accessory subunits vah-19/Ac45 and vah-20/PRR.

The protein resides in the membrane. Proton-conducting pore forming subunit of the V0 complex of vacuolar(H+)-ATPase (V-ATPase), a multisubunit enzyme composed of a peripheral complex (V1) that hydrolyzes ATP and a membrane integral complex (V0) that translocates protons. V-ATPase is responsible for acidifying and maintaining the pH of intracellular compartments and in some cell types, is targeted to the plasma membrane, where it is responsible for acidifying the extracellular environment. Involved in necrotic cell death. Required along with other vacuolar ATPase components for the removal of protein aggregates which form in immature oocytes in the distal gonad. This removal occurs as the oocytes mature and move to the proximal gonad, is triggered by the introduction of sperm through mating and occurs before fertilization. The introduction of sperm triggers V-ATPase accumulation in proximal oocytes and induces lysosomal acidification which leads to engulfing of protein aggregates by lysosomes and subsequent clearance of the aggregates. Lysosomal acidification also leads to changes in mitochondrial morphology and function. Mitochondria in distal immature oocytes are fragmented, produce high levels of reactive oxygen species (ROS) and have high membrane potential, indicative of metabolic inactivity. In contrast, mitochondria in proximal mature oocytes are tubular with lower ROS levels and membrane potential, indicative of an active metabolic state required for aggregate mobilization before clearance. The chain is V-type proton ATPase 16 kDa proteolipid subunit c 2 from Caenorhabditis briggsae.